The chain runs to 327 residues: MEAIKGSDVNVPDAVFAWLLDGRGGVKPLEDNDVIDSQHPCWLHLNYTHPDSARWLASTPLLPNNVRDALAGESSRPRVSRMGEGTLITLRCINGSTDERPDQLVAMRLYMDERFIVSTRQRKVLALDDVVSDLQEGTGPVDCGSWLVDVCDALTDHASEFIEELHDKIIDLEDNLLDQQIPPRGFLALLRKQLIVMRRYMAPQRDVYARLASERLPWMSDDHRRRMQDIADRLGRGLDEIDACIARTGIMADEIAQVMQESLARRTYTMSLMAMVFLPSTFLTGLFGVNLGGIPGGGWRFGFSLFCILLVVLIGGVTLWLHRSKWL.

At 1 to 273 (MEAIKGSDVN…ARRTYTMSLM (273 aa)) the chain is on the cytoplasmic side. Residues 274 to 294 (AMVFLPSTFLTGLFGVNLGGI) traverse the membrane as a helical segment. The Periplasmic segment spans residues 295–300 (PGGGWR). The helical transmembrane segment at 301–321 (FGFSLFCILLVVLIGGVTLWL) threads the bilayer. Residues 322 to 327 (HRSKWL) lie on the Cytoplasmic side of the membrane.

It belongs to the CorA metal ion transporter (MIT) (TC 1.A.35) family.

Its subcellular location is the cell inner membrane. The catalysed reaction is Zn(2+)(out) + H(+)(out) = Zn(2+)(in) + H(+)(in). Its function is as follows. Zinc transporter. Acts as a Zn(2+):proton symporter, which likely mediates zinc ion uptake. The protein is Zinc transport protein ZntB of Salmonella enteritidis PT4 (strain P125109).